We begin with the raw amino-acid sequence, 229 residues long: Flagellar L-ring protein (229 aa).

The N-terminal stretch at 1–23 (MSPLTRIALALAASAALVLALTA) is a signal peptide. A lipid anchor (N-palmitoyl cysteine) is attached at Cys-24. Cys-24 is lipidated: S-diacylglycerol cysteine.

This sequence belongs to the FlgH family. As to quaternary structure, the basal body constitutes a major portion of the flagellar organelle and consists of four rings (L,P,S, and M) mounted on a central rod.

The protein resides in the cell outer membrane. It localises to the bacterial flagellum basal body. In terms of biological role, assembles around the rod to form the L-ring and probably protects the motor/basal body from shearing forces during rotation. This chain is Flagellar L-ring protein, found in Anaeromyxobacter dehalogenans (strain 2CP-C).